The sequence spans 90 residues: Mitochondrial import inner membrane translocase subunit Tim9 (90 aa).

Positions 24 to 48 (CFNSCVNEFGSRTVSGKEESCANNC) match the Twin CX3C motif motif. Disulfide bonds link Cys-24–Cys-48 and Cys-28–Cys-44.

Belongs to the small Tim family. In terms of assembly, heterohexamer; composed of 3 copies of tim-9/tin-9.1 and 3 copies of tim-10/tin-10, named soluble 70 kDa complex. The complex associates with the tim-22 component of the TIM22 complex. Interacts with multi-pass transmembrane proteins in transit.

Its subcellular location is the mitochondrion inner membrane. Functionally, mitochondrial intermembrane chaperone that participates in the import and insertion of multi-pass transmembrane proteins into the mitochondrial inner membrane. May also be required for the transfer of beta-barrel precursors from the TOM complex to the sorting and assembly machinery (SAM complex) of the outer membrane. Acts as a chaperone-like protein that protects the hydrophobic precursors from aggregation and guide them through the mitochondrial intermembrane space. This is Mitochondrial import inner membrane translocase subunit Tim9 (tin-9.1) from Caenorhabditis elegans.